The chain runs to 341 residues: Chorismate synthase (341 aa).

2 disordered regions span residues 45–64 and 109–134; these read LERRRPGHHGSGQIVSGRQE and HADDMWRNKFGHSDHRGGGRSSGRET. Arginine 48 provides a ligand contact to NADP(+). FMN contacts are provided by residues 128 to 130, glycine 280, 295 to 299, and arginine 308; these read RSS and KPTSS.

Belongs to the chorismate synthase family. In terms of assembly, homotetramer. It depends on FMNH2 as a cofactor.

It catalyses the reaction 5-O-(1-carboxyvinyl)-3-phosphoshikimate = chorismate + phosphate. Its pathway is metabolic intermediate biosynthesis; chorismate biosynthesis; chorismate from D-erythrose 4-phosphate and phosphoenolpyruvate: step 7/7. Its function is as follows. Catalyzes the anti-1,4-elimination of the C-3 phosphate and the C-6 proR hydrogen from 5-enolpyruvylshikimate-3-phosphate (EPSP) to yield chorismate, which is the branch point compound that serves as the starting substrate for the three terminal pathways of aromatic amino acid biosynthesis. This reaction introduces a second double bond into the aromatic ring system. This chain is Chorismate synthase, found in Bdellovibrio bacteriovorus (strain ATCC 15356 / DSM 50701 / NCIMB 9529 / HD100).